Consider the following 453-residue polypeptide: MHIQSLQQSPSFAVELHQAASGRLGQIEARQVATPSEAQQLAQRQDAPKGEGLLARLGAALVRPFVAIMDWLGKLLGSHARTGPQPSQDAQPAVMSSAVVFKQMVLQQALPMTLKGLDKASELATLTPEGLAREHSRLASGDGALRSLSTALAGIRAGSQVEESRIQAGRLLERSIGGIALQQWGTTGGAASQLVLDASPELRREITDQLHQVMSEVALLRQAVESEVSRVSADKALADGLVKRFGADAEKYLGRQPGGIHSDAEVMALGLYTGIHYADLNRALRQGQELDAGQKLIDQGMSAAFEKSGQAEQVVKTFRGTRGGDAFNAVEEGKVGHDDGYLSTSLNPGVARSFGQGTISTVFGRSGIDVSGISNYKNEKEILYNKETDMRVLLSASDEQGVTRRVLEEAALGEQSGHSQGLLDALDLASKPERSGEVQEQDVRLRMRGLDLA.

The Bacterial Rho-GAP domain occupies serine 96–serine 229. Residues aspartate 239–glutamate 414 enclose the TR mART core domain. Residues arginine 319, serine 343, and glutamate 381 contribute to the active site.

It is found in the secreted. It carries out the reaction L-arginyl-[protein] + NAD(+) = N(omega)-(ADP-D-ribosyl)-L-arginyl-[protein] + nicotinamide + H(+). Its function is as follows. Bifunctional effector protein that is secreted and delivered by the type III secretion system into eukaryotic target cells. ADP-ribosylates several eukaryotic proteins including ezrin/radixin/moesin (ERM), cyclophilin A and several members of the Ras superfamily. Host Ras ADP-ribosylation blocks its activation by its guanine nucleotide exchange factor, thereby interfering with Ras-mediated signal transduction. For instance, prevents Ras from interacting with and activating phosphoinositol-3-kinase (PI3K), which is required to stimulate the phagocytic NADPH-oxidase that generates reactive oxygen species. The TR mART core domain also contributes to bacterial dissemination to the blood during pneumonia. In addition to this activity, acts via its N-terminal region as a GTPase-activating protein (GAP) for host Rho GTPases including RhoA, Rac1, Cdc42 and Ras. The bacterial Rho-GAP domain activity induces mitochondrial disruption in the target host cell by activating host caspases 3 and 9 that execute cellular death. In Pseudomonas aeruginosa (strain ATCC 15692 / DSM 22644 / CIP 104116 / JCM 14847 / LMG 12228 / 1C / PRS 101 / PAO1), this protein is Secreted exoenzyme S (exoS).